Consider the following 502-residue polypeptide: ATP synthase subunit alpha (502 aa).

A disordered region spans residues 117–139 (GMGPVLTSKTRPIESPAPGVMDR). ATP is bound at residue 169–176 (GDRQTGKT).

The protein belongs to the ATPase alpha/beta chains family. In terms of assembly, F-type ATPases have 2 components, CF(1) - the catalytic core - and CF(0) - the membrane proton channel. CF(1) has five subunits: alpha(3), beta(3), gamma(1), delta(1), epsilon(1). CF(0) has three main subunits: a(1), b(2) and c(9-12). The alpha and beta chains form an alternating ring which encloses part of the gamma chain. CF(1) is attached to CF(0) by a central stalk formed by the gamma and epsilon chains, while a peripheral stalk is formed by the delta and b chains.

It localises to the cell membrane. It catalyses the reaction ATP + H2O + 4 H(+)(in) = ADP + phosphate + 5 H(+)(out). Its function is as follows. Produces ATP from ADP in the presence of a proton gradient across the membrane. The alpha chain is a regulatory subunit. This chain is ATP synthase subunit alpha, found in Bacillus licheniformis (strain ATCC 14580 / DSM 13 / JCM 2505 / CCUG 7422 / NBRC 12200 / NCIMB 9375 / NCTC 10341 / NRRL NRS-1264 / Gibson 46).